A 340-amino-acid chain; its full sequence is Protein B17 (340 aa).

It belongs to the orthopoxvirus B17 protein family.

The protein is Protein B17 of Vaccinia virus (strain Copenhagen) (VACV).